The sequence spans 948 residues: Probable DNA-directed RNA polymerase (948 aa).

Active-site residues include D600, K680, and D853.

The protein belongs to the phage and mitochondrial RNA polymerase family.

The protein resides in the mitochondrion. It catalyses the reaction RNA(n) + a ribonucleoside 5'-triphosphate = RNA(n+1) + diphosphate. Functionally, DNA-dependent RNA polymerase catalyzes the transcription of DNA into RNA using the four ribonucleoside triphosphates as substrates. This Podospora anserina (Pleurage anserina) protein is Probable DNA-directed RNA polymerase.